The sequence spans 480 residues: Cysteine--tRNA ligase (480 aa).

C29 is a binding site for Zn(2+). Residues 31–41 (VTVYDHCHIGH) carry the 'HIGH' region motif. The Zn(2+) site is built by C209, H234, and E238. The short motif at 266 to 270 (KMSKS) is the 'KMSKS' region element. Position 269 (K269) interacts with ATP.

It belongs to the class-I aminoacyl-tRNA synthetase family. In terms of assembly, monomer. Requires Zn(2+) as cofactor.

It is found in the cytoplasm. The catalysed reaction is tRNA(Cys) + L-cysteine + ATP = L-cysteinyl-tRNA(Cys) + AMP + diphosphate. The sequence is that of Cysteine--tRNA ligase from Geobacter sp. (strain M21).